The sequence spans 167 residues: Ureidoglycolate lyase (167 aa).

It belongs to the ureidoglycolate lyase family. As to quaternary structure, homodimer. Ni(2+) serves as cofactor.

It catalyses the reaction (S)-ureidoglycolate = urea + glyoxylate. It functions in the pathway nitrogen metabolism; (S)-allantoin degradation. Catalyzes the catabolism of the allantoin degradation intermediate (S)-ureidoglycolate, generating urea and glyoxylate. Involved in the utilization of allantoin as nitrogen source. The sequence is that of Ureidoglycolate lyase from Pseudomonas putida (strain W619).